Here is a 50-residue protein sequence, read N- to C-terminus: U-megalopygitoxin(9)-Mo13 (50 aa).

A signal peptide spans 1-23; that stretch reads MKLVFLFFIVAVMVSLFVGMTEA. A disulfide bond links Cys33 and Cys40.

It belongs to the caterpillar 9 family. As to expression, expressed by the venom apparatus.

It is found in the secreted. Its function is as follows. Probable toxin. The protein is U-megalopygitoxin(9)-Mo13 of Megalopyge opercularis (Southern flannel moth).